A 264-amino-acid polypeptide reads, in one-letter code: Hydroxyethylthiazole kinase (264 aa).

M52 contributes to the substrate binding site. Residues R127 and T173 each coordinate ATP. G200 contributes to the substrate binding site.

Belongs to the Thz kinase family. Mg(2+) serves as cofactor.

It carries out the reaction 5-(2-hydroxyethyl)-4-methylthiazole + ATP = 4-methyl-5-(2-phosphooxyethyl)-thiazole + ADP + H(+). It participates in cofactor biosynthesis; thiamine diphosphate biosynthesis; 4-methyl-5-(2-phosphoethyl)-thiazole from 5-(2-hydroxyethyl)-4-methylthiazole: step 1/1. Catalyzes the phosphorylation of the hydroxyl group of 4-methyl-5-beta-hydroxyethylthiazole (THZ). The polypeptide is Hydroxyethylthiazole kinase (Pectobacterium atrosepticum (strain SCRI 1043 / ATCC BAA-672) (Erwinia carotovora subsp. atroseptica)).